Consider the following 156-residue polypeptide: Deoxyuridine 5'-triphosphate nucleotidohydrolase (156 aa).

Substrate-binding positions include 76–78 (RSG), asparagine 89, 93–95 (TVD), and lysine 103.

This sequence belongs to the dUTPase family. Mg(2+) serves as cofactor.

It carries out the reaction dUTP + H2O = dUMP + diphosphate + H(+). It functions in the pathway pyrimidine metabolism; dUMP biosynthesis; dUMP from dCTP (dUTP route): step 2/2. Functionally, this enzyme is involved in nucleotide metabolism: it produces dUMP, the immediate precursor of thymidine nucleotides and it decreases the intracellular concentration of dUTP so that uracil cannot be incorporated into DNA. The polypeptide is Deoxyuridine 5'-triphosphate nucleotidohydrolase (Rhizobium etli (strain ATCC 51251 / DSM 11541 / JCM 21823 / NBRC 15573 / CFN 42)).